An 858-amino-acid chain; its full sequence is Toll-like receptor 5 (858 aa).

The N-terminal stretch at 1 to 20 (MGDHLDLLLGVVLMAGPVFG) is a signal peptide. The Extracellular segment spans residues 21 to 639 (IPSCSFDGRI…DEEEVLKSLK (619 aa)). Residues N37 and N46 are each glycosylated (N-linked (GlcNAc...) asparagine). LRR repeat units lie at residues 45 to 68 (LNTT…SFPF), 71 to 93 (QLQL…AFRN), 95 to 117 (PNLR…AFQG), 120 to 143 (HLFE…YFRN), 146 to 166 (ALTR…HPSF), 171 to 192 (SLKS…ELEP), 197 to 211 (TLSF…LYSR), 214 to 229 (VDWG…MVLE), and 234 to 235 (SG). N-linked (GlcNAc...) asparagine glycosylation is present at N245. LRR repeat units follow at residues 260–284 (LAHH…TFAG), 289–301 (SVRH…GFVF), 313–334 (DLKV…AFYG), 337–355 (NLQV…YSSN), 385–401 (KLQT…TIHF), 412–431 (GNKL…IHLS), 449–470 (HLQI…QTPS), 474–495 (SLEQ…ELCW), 503–524 (HLQV…VFSH), 527–546 (ALRG…HNDL), and 549–567 (NLEI…NPDV). N-linked (GlcNAc...) asparagine glycosylation is present at N342. N422 carries an N-linked (GlcNAc...) asparagine glycan. The LRRCT domain occupies 579–631 (NKFICECELSTFINWLNHTNVTIAGPPADIYCVYPDSFSGVSLFSLSTEGCDE). Cystine bridges form between C583–C610 and C585–C629. N-linked (GlcNAc...) asparagine glycosylation is found at N595 and N598. The chain crosses the membrane as a helical span at residues 640–660 (FSLFIVCTVTLTLFLMTILTV). Topologically, residues 661 to 858 (TKFRGFCFIC…IPLQTVATIS (198 aa)) are cytoplasmic. The TIR domain maps to 691 to 836 (YKYDAYLCFS…WFLHKLSQQI (146 aa)). Y798 is modified (phosphotyrosine). S805 carries the phosphoserine; by PKD/PRKD1 modification.

The protein belongs to the Toll-like receptor family. Homodimer. Interacts with MYD88 (via TIR domain). Interacts with TICAM1 (via TIR domain). Interacts with UNC93B1; this interaction is essential for proper TLR5 localization to the plasma membrane. Post-translationally, phosphorylated at Ser-805 by PKD/PRKD1; phosphorylation induces the production of inflammatory cytokines. In terms of processing, phosphorylated at Tyr-798 upon flagellin binding; required for signaling. In terms of tissue distribution, highly expressed on the basolateral surface of intestinal epithelia. Expressed also in other cells such as lung epithelial cells.

The protein resides in the cell membrane. Functionally, pattern recognition receptor (PRR) located on the cell surface that participates in the activation of innate immunity and inflammatory response. Recognizes small molecular motifs named pathogen-associated molecular pattern (PAMPs) expressed by pathogens and microbe-associated molecular patterns (MAMPs) usually expressed by resident microbiota. Upon ligand binding such as bacterial flagellins, recruits intracellular adapter proteins MYD88 and TRIF leading to NF-kappa-B activation, cytokine secretion and induction of the inflammatory response. Plays thereby an important role in the relationship between the intestinal epithelium and enteric microbes and contributes to the gut microbiota composition throughout life. In Homo sapiens (Human), this protein is Toll-like receptor 5 (TLR5).